Here is a 314-residue protein sequence, read N- to C-terminus: Deoxymugineic acid synthase 1 (314 aa).

Residue Asp44 coordinates NADP(+). Tyr49 serves as the catalytic Proton donor. His112 contacts substrate. NADP(+) is bound by residues 158–159 (CN), Gln180, 258–266 (FDEGRMKEN), and 273–281 (ELSEEERQR).

It belongs to the aldo/keto reductase family.

The enzyme catalyses 2'-deoxymugineate + NAD(+) = 3''-deamino-3''-oxonicotianamine + NADH + H(+). The catalysed reaction is 2'-deoxymugineate + NADP(+) = 3''-deamino-3''-oxonicotianamine + NADPH + H(+). It functions in the pathway siderophore biosynthesis. Its function is as follows. Catalyzes the reduction of a 3''-keto intermediate during the biosynthesis of 2'-deoxymugineic acid (DMA) from L-Met. Involved in the formation of phytosiderophores (MAs) belonging to the mugineic acid family and required to acquire iron. The chain is Deoxymugineic acid synthase 1 from Zea mays (Maize).